The chain runs to 401 residues: Ornithine aminotransferase (401 aa).

K258 carries the N6-(pyridoxal phosphate)lysine modification.

This sequence belongs to the class-III pyridoxal-phosphate-dependent aminotransferase family. OAT subfamily. Pyridoxal 5'-phosphate is required as a cofactor.

It is found in the cytoplasm. The catalysed reaction is a 2-oxocarboxylate + L-ornithine = L-glutamate 5-semialdehyde + an L-alpha-amino acid. It functions in the pathway amino-acid biosynthesis; L-proline biosynthesis; L-glutamate 5-semialdehyde from L-ornithine: step 1/1. In terms of biological role, catalyzes the interconversion of ornithine to glutamate semialdehyde. The polypeptide is Ornithine aminotransferase (Bacillus subtilis (strain 168)).